The following is a 239-amino-acid chain: Ribonuclease PH (239 aa).

Phosphate contacts are provided by residues R86 and 124 to 126 (GTR).

It belongs to the RNase PH family. Homohexameric ring arranged as a trimer of dimers.

It catalyses the reaction tRNA(n+1) + phosphate = tRNA(n) + a ribonucleoside 5'-diphosphate. Phosphorolytic 3'-5' exoribonuclease that plays an important role in tRNA 3'-end maturation. Removes nucleotide residues following the 3'-CCA terminus of tRNAs; can also add nucleotides to the ends of RNA molecules by using nucleoside diphosphates as substrates, but this may not be physiologically important. Probably plays a role in initiation of 16S rRNA degradation (leading to ribosome degradation) during starvation. This is Ribonuclease PH from Marinomonas sp. (strain MWYL1).